The chain runs to 154 residues: 6,7-dimethyl-8-ribityllumazine synthase (154 aa).

5-amino-6-(D-ribitylamino)uracil is bound by residues F26, 60 to 62 (ALE), and 84 to 86 (CII). (2S)-2-hydroxy-3-oxobutyl phosphate is bound at residue 89–90 (ET). Catalysis depends on H92, which acts as the Proton donor. Position 117 (N117) interacts with 5-amino-6-(D-ribitylamino)uracil. R131 provides a ligand contact to (2S)-2-hydroxy-3-oxobutyl phosphate.

Belongs to the DMRL synthase family.

It carries out the reaction (2S)-2-hydroxy-3-oxobutyl phosphate + 5-amino-6-(D-ribitylamino)uracil = 6,7-dimethyl-8-(1-D-ribityl)lumazine + phosphate + 2 H2O + H(+). It participates in cofactor biosynthesis; riboflavin biosynthesis; riboflavin from 2-hydroxy-3-oxobutyl phosphate and 5-amino-6-(D-ribitylamino)uracil: step 1/2. Catalyzes the formation of 6,7-dimethyl-8-ribityllumazine by condensation of 5-amino-6-(D-ribitylamino)uracil with 3,4-dihydroxy-2-butanone 4-phosphate. This is the penultimate step in the biosynthesis of riboflavin. The chain is 6,7-dimethyl-8-ribityllumazine synthase from Paracidovorax citrulli (strain AAC00-1) (Acidovorax citrulli).